The chain runs to 345 residues: Protein RecA (345 aa).

An ATP-binding site is contributed by 67–74 (GPESSGKT).

Belongs to the RecA family.

Its subcellular location is the cytoplasm. Functionally, can catalyze the hydrolysis of ATP in the presence of single-stranded DNA, the ATP-dependent uptake of single-stranded DNA by duplex DNA, and the ATP-dependent hybridization of homologous single-stranded DNAs. It interacts with LexA causing its activation and leading to its autocatalytic cleavage. This is Protein RecA from Acidothermus cellulolyticus (strain ATCC 43068 / DSM 8971 / 11B).